An 89-amino-acid polypeptide reads, in one-letter code: Small ribosomal subunit protein uS19 (89 aa).

This sequence belongs to the universal ribosomal protein uS19 family.

Protein S19 forms a complex with S13 that binds strongly to the 16S ribosomal RNA. The polypeptide is Small ribosomal subunit protein uS19 (Ruthia magnifica subsp. Calyptogena magnifica).